We begin with the raw amino-acid sequence, 182 residues long: RFKKIRRLGALPGLTSKRPGSGSDPKNKSRSGKRSQYRIRLEEKQKLRFHYGLTERQLLKYVHIAGKAKGSTGLVLLQLLEMRLDNILFRLGMASTIPGARQLVNHRHILVNGRIVDIPSYRCKPRDIITTKDKQRSKALIQNYIASSPHEELPNHLTIDPIQYKGLVNQIIDSKWIGLKIN.

Residues 8-36 (LGALPGLTSKRPGSGSDPKNKSRSGKRSQ) are disordered. Residues 82–143 (MRLDNILFRL…KQRSKALIQN (62 aa)) enclose the S4 RNA-binding domain.

This sequence belongs to the universal ribosomal protein uS4 family. As to quaternary structure, part of the 30S ribosomal subunit. Contacts protein S5. The interaction surface between S4 and S5 is involved in control of translational fidelity.

The protein resides in the plastid. The protein localises to the chloroplast. In terms of biological role, one of the primary rRNA binding proteins, it binds directly to 16S rRNA where it nucleates assembly of the body of the 30S subunit. Its function is as follows. With S5 and S12 plays an important role in translational accuracy. The polypeptide is Small ribosomal subunit protein uS4c (rps4) (Dietes robinsoniana (Lord Howe wedding lily)).